A 120-amino-acid polypeptide reads, in one-letter code: Large ribosomal subunit protein bL12 (120 aa).

It belongs to the bacterial ribosomal protein bL12 family. In terms of assembly, homodimer. Part of the ribosomal stalk of the 50S ribosomal subunit. Forms a multimeric L10(L12)X complex, where L10 forms an elongated spine to which 2 to 4 L12 dimers bind in a sequential fashion. Binds GTP-bound translation factors.

In terms of biological role, forms part of the ribosomal stalk which helps the ribosome interact with GTP-bound translation factors. Is thus essential for accurate translation. The sequence is that of Large ribosomal subunit protein bL12 from Listeria monocytogenes serotype 4b (strain CLIP80459).